Here is a 115-residue protein sequence, read N- to C-terminus: Large ribosomal subunit protein bL19 (115 aa).

It belongs to the bacterial ribosomal protein bL19 family.

Its function is as follows. This protein is located at the 30S-50S ribosomal subunit interface and may play a role in the structure and function of the aminoacyl-tRNA binding site. The polypeptide is Large ribosomal subunit protein bL19 (Akkermansia muciniphila (strain ATCC BAA-835 / DSM 22959 / JCM 33894 / BCRC 81048 / CCUG 64013 / CIP 107961 / Muc)).